A 160-amino-acid polypeptide reads, in one-letter code: Glucan endo-1,3-beta-glucosidase, acidic isoform PR-O (160 aa).

The Nucleophile role is filled by Glu81.

The protein belongs to the glycosyl hydrolase 17 family. The N-terminus is blocked.

It is found in the secreted. It localises to the extracellular space. It catalyses the reaction Hydrolysis of (1-&gt;3)-beta-D-glucosidic linkages in (1-&gt;3)-beta-D-glucans.. In terms of biological role, implicated in the defense of plants against pathogens. In Nicotiana tabacum (Common tobacco), this protein is Glucan endo-1,3-beta-glucosidase, acidic isoform PR-O (PR0).